The chain runs to 268 residues: UPF0719 transmembrane protein aq_1349 (268 aa).

The next 8 membrane-spanning stretches (helical) occupy residues 5–24, 37–59, 69–91, 104–126, 130–152, 173–195, 210–232, and 245–267; these read LIALFWVIFSKYVFDVLFFR, NLALSLSYAGYFLGLAFSFYSVY, LYLIFVSFTLLLGVYIFDLIFLR, AGAGITQGIYFLSLGILISASFW, SFILSVIYSLIYLSLGMVMLFIS, FSASLVLGSITLGVSVVLYGAIS, VLYFVVSQVLMVIFYVVVEFLLF, and NLSASLILSATFIASAFITLAVM.

The protein belongs to the UPF0719 family.

The protein localises to the cell membrane. This chain is UPF0719 transmembrane protein aq_1349, found in Aquifex aeolicus (strain VF5).